A 418-amino-acid chain; its full sequence is Bifunctional protein GlmU (418 aa).

Residues Met1–Arg236 form a pyrophosphorylase region. Residues Leu7 to Gly10, Lys21, Gln74, Gly79 to Thr80, Tyr102 to Asp104, Gly141, Glu155, Asn170, and Asn234 contribute to the UDP-N-acetyl-alpha-D-glucosamine site. Asp104 contacts Mg(2+). Residue Asn234 coordinates Mg(2+). The interval Val237–Ala257 is linker. The segment at Gly258 to Gln418 is N-acetyltransferase. Positions 339 and 357 each coordinate UDP-N-acetyl-alpha-D-glucosamine. His369 acts as the Proton acceptor in catalysis. Tyr372 provides a ligand contact to UDP-N-acetyl-alpha-D-glucosamine. Ala386 contacts acetyl-CoA.

It in the N-terminal section; belongs to the N-acetylglucosamine-1-phosphate uridyltransferase family. In the C-terminal section; belongs to the transferase hexapeptide repeat family. Homotrimer. Mg(2+) is required as a cofactor.

The protein resides in the cytoplasm. It carries out the reaction alpha-D-glucosamine 1-phosphate + acetyl-CoA = N-acetyl-alpha-D-glucosamine 1-phosphate + CoA + H(+). The catalysed reaction is N-acetyl-alpha-D-glucosamine 1-phosphate + UTP + H(+) = UDP-N-acetyl-alpha-D-glucosamine + diphosphate. The protein operates within nucleotide-sugar biosynthesis; UDP-N-acetyl-alpha-D-glucosamine biosynthesis; N-acetyl-alpha-D-glucosamine 1-phosphate from alpha-D-glucosamine 6-phosphate (route II): step 2/2. It functions in the pathway nucleotide-sugar biosynthesis; UDP-N-acetyl-alpha-D-glucosamine biosynthesis; UDP-N-acetyl-alpha-D-glucosamine from N-acetyl-alpha-D-glucosamine 1-phosphate: step 1/1. It participates in bacterial outer membrane biogenesis; LPS lipid A biosynthesis. Its function is as follows. Catalyzes the last two sequential reactions in the de novo biosynthetic pathway for UDP-N-acetylglucosamine (UDP-GlcNAc). The C-terminal domain catalyzes the transfer of acetyl group from acetyl coenzyme A to glucosamine-1-phosphate (GlcN-1-P) to produce N-acetylglucosamine-1-phosphate (GlcNAc-1-P), which is converted into UDP-GlcNAc by the transfer of uridine 5-monophosphate (from uridine 5-triphosphate), a reaction catalyzed by the N-terminal domain. The polypeptide is Bifunctional protein GlmU (Cutibacterium acnes (strain DSM 16379 / KPA171202) (Propionibacterium acnes)).